A 324-amino-acid chain; its full sequence is tRNA U34 carboxymethyltransferase (324 aa).

Residues lysine 91, tryptophan 105, lysine 110, glycine 130, 152-154 (DPS), 181-182 (IE), methionine 196, tyrosine 200, and arginine 315 each bind carboxy-S-adenosyl-L-methionine.

This sequence belongs to the class I-like SAM-binding methyltransferase superfamily. CmoB family. In terms of assembly, homotetramer.

It carries out the reaction carboxy-S-adenosyl-L-methionine + 5-hydroxyuridine(34) in tRNA = 5-carboxymethoxyuridine(34) in tRNA + S-adenosyl-L-homocysteine + H(+). Functionally, catalyzes carboxymethyl transfer from carboxy-S-adenosyl-L-methionine (Cx-SAM) to 5-hydroxyuridine (ho5U) to form 5-carboxymethoxyuridine (cmo5U) at position 34 in tRNAs. The sequence is that of tRNA U34 carboxymethyltransferase from Photobacterium profundum (strain SS9).